Reading from the N-terminus, the 2511-residue chain is Fatty acid synthase (2511 aa).

Met1 bears the N-acetylmethionine mark. The 406-residue stretch at 1–406 (MEEVVIAGMS…GSNVHIILRP (406 aa)) folds into the Ketosynthase family 3 (KS3) domain. At Ser63 the chain carries Phosphoserine. Lys70 bears the N6-acetyllysine mark. The active-site For beta-ketoacyl synthase activity is the Cys161. The residue at position 207 (Ser207) is a Phosphoserine. His293 serves as the catalytic For beta-ketoacyl synthase activity. Residue Lys298 is modified to N6-acetyllysine. His331 acts as the For beta-ketoacyl synthase activity in catalysis. An acyl and malonyl transferases region spans residues 429 to 817 (RTPEAVQKLL…IDANPNALFP (389 aa)). N6-acetyllysine is present on residues Lys436 and Lys528. Residue Ser581 is the For malonyltransferase activity of the active site. An acyl-CoA-binding positions include 647-648 (DT) and Phe671. The residue at position 673 (Lys673) is an N6-acetyllysine. Ser725 is subject to Phosphoserine. Arg773 is an an acyl-CoA binding site. The segment at 838 to 966 (HSLAWDVPAA…KVYQWDDPDP (129 aa)) is N-terminal hotdog fold. Residues 838–1108 (HSLAWDVPAA…TESAPRRQQE (271 aa)) enclose the PKS/mFAS DH domain. The active-site Proton acceptor; for dehydratase activity is the His878. Residues 981–1108 (EPLFLAQAEV…TESAPRRQQE (128 aa)) are C-terminal hotdog fold. Lys992 is subject to N6-acetyllysine. Asp1031 (proton donor; for dehydratase activity) is an active-site residue. Phosphoserine occurs at positions 1174 and 1411. Position 1471 is an S-nitrosocysteine (Cys1471). 2 positions are modified to phosphoserine: Ser1584 and Ser1594. The enoyl reductase stretch occupies residues 1635–1863 (DVPSNWTLEE…VQVLAEEPEA (229 aa)). Residue 1671-1688 (LLIHSGSGGVGQAAIAIA) coordinates NADP(+). Position 1704 is an N6-(pyridoxal phosphate)lysine; alternate (Lys1704). Lys1704 carries the N6-acetyllysine; alternate modification. Lys1771 and Lys1847 each carry N6-acetyllysine. Residues 1864-2118 (VLKGAKPKLM…FVLAEKAAAY (255 aa)) form a beta-ketoacyl reductase region. An NADP(+)-binding site is contributed by 1886 to 1901 (SYIIAGGLGGFGLELA). Lys1995 bears the N6-acetyllysine mark. Position 2091 is an S-nitrosocysteine (Cys2091). One can recognise a Carrier domain in the interval 2121–2198 (RDSQRDLVEA…ELSSKADEAS (78 aa)). The residue at position 2156 (Ser2156) is an O-(pantetheine 4'-phosphoryl)serine; alternate. A Phosphoserine; alternate modification is found at Ser2156. Position 2198 is a phosphoserine (Ser2198). Residues Thr2204 and Thr2215 each carry the phosphothreonine modification. Positions 2207-2511 (EDGLAQQQTQ…AEPRVSVREG (305 aa)) are thioesterase. Phosphoserine is present on Ser2236. The active-site For thioesterase activity is Ser2308. Lys2391 bears the N6-acetyllysine mark. Residue Lys2449 forms a Glycyl lysine isopeptide (Lys-Gly) (interchain with G-Cter in SUMO2) linkage. Catalysis depends on His2481, which acts as the For thioesterase activity.

In terms of assembly, homodimer which is arranged in a head to tail fashion. Interacts with CEACAM1; this interaction is insulin and phosphorylation-dependent; reduces fatty-acid synthase activity. Post-translationally, S-nitrosylation of Fatty acid synthase at cysteine residues Cys-1471 or Cys-2091 is important for the enzyme dimerization. In adipocytes, S-nitrosylation of Fatty acid synthase occurs under physiological conditions and gradually increases during adipogenesis. In terms of tissue distribution, ubiquitous. Prominent expression in brain, lung, liver and mammary gland.

It localises to the cytoplasm. It is found in the melanosome. The enzyme catalyses acetyl-CoA + n malonyl-CoA + 2n NADPH + 2n H(+) = a long-chain fatty acid + (n+1) CoA + n CO2 + 2n NADP(+).. It carries out the reaction holo-[ACP] + acetyl-CoA = acetyl-[ACP] + CoA. The catalysed reaction is holo-[ACP] + malonyl-CoA = malonyl-[ACP] + CoA. It catalyses the reaction a fatty acyl-[ACP] + malonyl-[ACP] + H(+) = a 3-oxoacyl-[ACP] + holo-[ACP] + CO2. The enzyme catalyses a (3R)-hydroxyacyl-[ACP] + NADP(+) = a 3-oxoacyl-[ACP] + NADPH + H(+). It carries out the reaction a (3R)-hydroxyacyl-[ACP] = a (2E)-enoyl-[ACP] + H2O. The catalysed reaction is a 2,3-saturated acyl-[ACP] + NADP(+) = a (2E)-enoyl-[ACP] + NADPH + H(+). It catalyses the reaction hexadecanoyl-[ACP] + H2O = hexadecanoate + holo-[ACP] + H(+). The enzyme catalyses acetyl-[ACP] + malonyl-[ACP] + H(+) = 3-oxobutanoyl-[ACP] + holo-[ACP] + CO2. It carries out the reaction 3-oxobutanoyl-[ACP] + NADPH + H(+) = (3R)-hydroxybutanoyl-[ACP] + NADP(+). The catalysed reaction is (3R)-hydroxybutanoyl-[ACP] = (2E)-butenoyl-[ACP] + H2O. It catalyses the reaction (2E)-butenoyl-[ACP] + NADPH + H(+) = butanoyl-[ACP] + NADP(+). The enzyme catalyses butanoyl-[ACP] + malonyl-[ACP] + H(+) = 3-oxohexanoyl-[ACP] + holo-[ACP] + CO2. It carries out the reaction 3-oxohexanoyl-[ACP] + NADPH + H(+) = (3R)-hydroxyhexanoyl-[ACP] + NADP(+). The catalysed reaction is (3R)-hydroxyhexanoyl-[ACP] = (2E)-hexenoyl-[ACP] + H2O. It catalyses the reaction (2E)-hexenoyl-[ACP] + NADPH + H(+) = hexanoyl-[ACP] + NADP(+). The enzyme catalyses hexanoyl-[ACP] + malonyl-[ACP] + H(+) = 3-oxooctanoyl-[ACP] + holo-[ACP] + CO2. It carries out the reaction 3-oxooctanoyl-[ACP] + NADPH + H(+) = (3R)-hydroxyoctanoyl-[ACP] + NADP(+). The catalysed reaction is (3R)-hydroxyoctanoyl-[ACP] = (2E)-octenoyl-[ACP] + H2O. It catalyses the reaction (2E)-octenoyl-[ACP] + NADPH + H(+) = octanoyl-[ACP] + NADP(+). The enzyme catalyses octanoyl-[ACP] + malonyl-[ACP] + H(+) = 3-oxodecanoyl-[ACP] + holo-[ACP] + CO2. It carries out the reaction 3-oxodecanoyl-[ACP] + NADPH + H(+) = (3R)-hydroxydecanoyl-[ACP] + NADP(+). The catalysed reaction is (3R)-hydroxydecanoyl-[ACP] = (2E)-decenoyl-[ACP] + H2O. It catalyses the reaction (2E)-decenoyl-[ACP] + NADPH + H(+) = decanoyl-[ACP] + NADP(+). The enzyme catalyses decanoyl-[ACP] + malonyl-[ACP] + H(+) = 3-oxododecanoyl-[ACP] + holo-[ACP] + CO2. It carries out the reaction 3-oxododecanoyl-[ACP] + NADPH + H(+) = (3R)-hydroxydodecanoyl-[ACP] + NADP(+). The catalysed reaction is (3R)-hydroxydodecanoyl-[ACP] = (2E)-dodecenoyl-[ACP] + H2O. It catalyses the reaction (2E)-dodecenoyl-[ACP] + NADPH + H(+) = dodecanoyl-[ACP] + NADP(+). The enzyme catalyses dodecanoyl-[ACP] + malonyl-[ACP] + H(+) = 3-oxotetradecanoyl-[ACP] + holo-[ACP] + CO2. It carries out the reaction 3-oxotetradecanoyl-[ACP] + NADPH + H(+) = (3R)-hydroxytetradecanoyl-[ACP] + NADP(+). The catalysed reaction is (3R)-hydroxytetradecanoyl-[ACP] = (2E)-tetradecenoyl-[ACP] + H2O. It catalyses the reaction (2E)-tetradecenoyl-[ACP] + NADPH + H(+) = tetradecanoyl-[ACP] + NADP(+). The enzyme catalyses tetradecanoyl-[ACP] + malonyl-[ACP] + H(+) = 3-oxohexadecanoyl-[ACP] + holo-[ACP] + CO2. It carries out the reaction 3-oxohexadecanoyl-[ACP] + NADPH + H(+) = (3R)-hydroxyhexadecanoyl-[ACP] + NADP(+). The catalysed reaction is (3R)-hydroxyhexadecanoyl-[ACP] = (2E)-hexadecenoyl-[ACP] + H2O. It catalyses the reaction (2E)-hexadecenoyl-[ACP] + NADPH + H(+) = hexadecanoyl-[ACP] + NADP(+). The enzyme catalyses hexadecanoyl-[ACP] + malonyl-[ACP] + H(+) = 3-oxooctadecanoyl-[ACP] + holo-[ACP] + CO2. It carries out the reaction 3-oxooctadecanoyl-[ACP] + NADPH + H(+) = (3R)-hydroxyoctadecanoyl-[ACP] + NADP(+). The catalysed reaction is (3R)-hydroxyoctadecanoyl-[ACP] = (2E)-octadecenoyl-[ACP] + H2O. It catalyses the reaction (2E)-octadecenoyl-[ACP] + NADPH + H(+) = octadecanoyl-[ACP] + NADP(+). The enzyme catalyses tetradecanoyl-[ACP] + H2O = tetradecanoate + holo-[ACP] + H(+). It carries out the reaction octadecanoyl-[ACP] + H2O = octadecanoate + holo-[ACP] + H(+). The protein operates within lipid metabolism; fatty acid biosynthesis. Its activity is regulated as follows. Activated by S-nitrosylation which promotes enzyme dimerization. Cerulenin, a potent non-competitive pharmacological inhibitor of FAS, binds covalently to the active site of the condensing enzyme region, inactivating a key enzyme step in fatty acid synthesis. Its function is as follows. Fatty acid synthetase is a multifunctional enzyme that catalyzes the de novo biosynthesis of long-chain saturated fatty acids starting from acetyl-CoA and malonyl-CoA in the presence of NADPH. This multifunctional protein contains 7 catalytic activities and a site for the binding of the prosthetic group 4'-phosphopantetheine of the acyl carrier protein ([ACP]) domain. In terms of biological role, (Microbial infection) Fatty acid synthetase activity is required for SARS coronavirus-2/SARS-CoV-2 replication. This is Fatty acid synthase (FASN) from Homo sapiens (Human).